The chain runs to 458 residues: N-acetylgalactosamine kinase (458 aa).

The alpha-D-galactose site is built by R43, E49, H50, and D52. ATP contacts are provided by G143, S145, and S146. D190 contacts alpha-D-galactose. The active-site Proton acceptor is D190. Positions 233 and 234 each coordinate ATP.

The protein belongs to the GHMP kinase family. GalK subfamily. As to quaternary structure, monomer.

It carries out the reaction N-acetyl-alpha-D-galactosamine + ATP = N-acetyl-alpha-D-galactosamine 1-phosphate + ADP + H(+). Acts on GalNAc. Also acts as a galactokinase when galactose is present at high concentrations. The chain is N-acetylgalactosamine kinase (Galk2) from Mus musculus (Mouse).